A 461-amino-acid chain; its full sequence is Squalene synthase BSS (461 aa).

Residues R51 and R76 each contribute to the NADP(+) site. Residues D79, E82, and D83 each contribute to the Mg(2+) site. Residues R219, K322, and R324 each coordinate NADP(+). Residues V430–P450 traverse the membrane as a helical segment.

Belongs to the phytoene/squalene synthase family. Mg(2+) serves as cofactor.

It is found in the endoplasmic reticulum membrane. It catalyses the reaction 2 (2E,6E)-farnesyl diphosphate + NADPH + H(+) = squalene + 2 diphosphate + NADP(+). The enzyme catalyses 2 (2E,6E)-farnesyl diphosphate + NADH + H(+) = squalene + 2 diphosphate + NAD(+). Functionally, converts farnesyl diphosphate (FPP) into squalene, a precursor for sterol biosynthesis in eukaryotes. Does not possess botryococcene synthase activity. The chain is Squalene synthase BSS from Botryococcus braunii (Green alga).